We begin with the raw amino-acid sequence, 179 residues long: Insulin-like growth factor 2 (179 aa).

An N-terminal signal peptide occupies residues 1 to 24 (MGITAGKSVLVLLAFLAFASCCYA). The tract at residues 25-52 (AYRPSETLCGGELVDTLQFVCGDRGFYF) is b. 3 disulfide bridges follow: Cys-33/Cys-71, Cys-45/Cys-84, and Cys-70/Cys-75. The segment at 53–64 (SRPSSRINRRSR) is c. An a region spans residues 65–85 (GIVEECCFRSCDLALLETYCA). The interval 86–91 (TPAKSE) is d. Residues 92–179 (RDVSASTTVL…GGASSKASSD (88 aa)) constitute a propeptide, e peptide. Thr-106 carries O-linked (GalNAc...) threonine glycosylation. Ser-154 carries O-linked (GalNAc...) serine glycosylation. Residues 160 to 179 (ALPTQDPATHGGASSKASSD) are disordered. Thr-163 is a glycosylation site (O-linked (GalNAc...) threonine).

The protein belongs to the insulin family. Interacts with MYORG; this interaction is required for IGF2 secretion. Interacts with integrins ITGAV:ITGB3 and ITGA6:ITGB4; integrin-binding is required for IGF2 signaling. Interacts with IGFBP2. Post-translationally, proteolytically processed by PCSK4, proIGF2 is cleaved at Arg-128 and Arg-92 to generate big-IGF2 and mature IGF2.

Its subcellular location is the secreted. Functionally, the insulin-like growth factors possess growth-promoting activity. Major fetal growth hormone in mammals. Plays a key role in regulating fetoplacental development. IGF2 is influenced by placental lactogen. Also involved in tissue differentiation. In adults, involved in glucose metabolism in adipose tissue, skeletal muscle and liver. Acts as a ligand for integrin which is required for IGF2 signaling. Positively regulates myogenic transcription factor MYOD1 function by facilitating the recruitment of transcriptional coactivators, thereby controlling muscle terminal differentiation. Inhibits myoblast differentiation and modulates metabolism via increasing the mitochondrial respiration rate. Its function is as follows. Preptin undergoes glucose-mediated co-secretion with insulin, and acts as a physiological amplifier of glucose-mediated insulin secretion. Exhibits osteogenic properties by increasing osteoblast mitogenic activity through phosphoactivation of MAPK1 and MAPK3. This is Insulin-like growth factor 2 from Bos taurus (Bovine).